The primary structure comprises 797 residues: Interphotoreceptor matrix proteoglycan 1 (797 aa).

Residues 1-20 (MYLETRRAIFVFWIFLQVQG) form the signal peptide. Residues Asn42, Asn143, Asn191, and Asn215 are each glycosylated (N-linked (GlcNAc...) asparagine). One can recognise an SEA 1 domain in the interval 232–354 (EEQRVELSVS…QPEIYLTATD (123 aa)). 4 O-linked (GalNAc...) threonine glycosylation sites follow: Thr403, Thr421, Thr432, and Thr442. In terms of domain architecture, SEA 2 spans 571-684 (RELVVFFSLR…YSLNIEPADQ (114 aa)). N-linked (GlcNAc...) asparagine glycosylation is found at Asn592 and Asn616. The Heparin- and hyaluronan-binding motif lies at 621–629 (KQLEILNFR). N-linked (GlcNAc...) asparagine glycosylation is found at Asn630 and Asn648.

The N-terminus is blocked. Post-translationally, highly glycosylated (N- and O-linked carbohydrates and sialic acid). As to expression, expressed in the retina (at protein level). In the retina, specifically expressed by cone and rod photoreceptor cells. Localizes to cone and rod photoreceptor cells surrounding the interphotoreceptor matrix of the retina.

It localises to the cell projection. It is found in the cilium. The protein localises to the photoreceptor outer segment. The protein resides in the secreted. Its subcellular location is the extracellular space. It localises to the extracellular matrix. It is found in the interphotoreceptor matrix. The protein localises to the photoreceptor inner segment. Functionally, chondroitin sulfate-, heparin- and hyaluronan-binding protein. May serve to form a basic macromolecular scaffold comprising the insoluble interphotoreceptor matrix. The sequence is that of Interphotoreceptor matrix proteoglycan 1 from Homo sapiens (Human).